The chain runs to 536 residues: Plasmepsin V (536 aa).

The first 34 residues, 1-34, serve as a signal peptide directing secretion; sequence MVGASLGPPGRGSLSRLIRLVICVLTLCALSVQG. The Lumenal portion of the chain corresponds to 35–492; the sequence is RSESTEGHSK…RKDNIFLKIP (458 aa). A Peptidase A1 domain is found at 62 to 462; it reads YFLDIDIGTP…DIQKNRIGFV (401 aa). Residue aspartate 80 is part of the active site. Disulfide bonds link cysteine 90-cysteine 172, cysteine 93-cysteine 96, cysteine 117-cysteine 128, cysteine 122-cysteine 133, cysteine 220-cysteine 466, cysteine 337-cysteine 382, and cysteine 391-cysteine 427. Residues 244 to 258 show a composition bias toward low complexity; sequence SKSVSGQGSGPVSES. The segment at 244–264 is disordered; it reads SKSVSGQGSGPVSESLSESGE. Residue aspartate 313 is part of the active site. A helical membrane pass occupies residues 493-513; the sequence is FFYLYSLFVVFALSVLLSLVF. Topologically, residues 514–536 are cytoplasmic; sequence YVRRLYHMEYSPLPSEGKAPADA.

Belongs to the peptidase A1 family. In terms of assembly, component of a complex composed of SPC25 and PMV; the interaction is mediated via the transmembrane domains. The complex interacts with the SEC61 channel-forming translocon complex and is involved in the recognition and import of PEXEL motif-containing proteins into the ER for subsequent export. It is not clear if the zymogen has a cleavable propeptide. Cleavage of the putative propeptide is dispensable for catalytic activity.

The protein localises to the endoplasmic reticulum membrane. With respect to regulation, inhibited by peptidomimetic inhibitors such as WEHI-842. Functionally, during the asexual blood stage, plays an essential role in the export of several proteins into the host erythrocytes by cleaving the pentameric localization motif RxLxE/Q/D (termed Plasmodium export element (PEXEL)) located downstream of the N-terminal secretory signal sequence. Specifically, cleaves after the leucine residue in the RxLxE/Q/D (or RxLxxE) motif of exported proteins including EMP1. Also, by regulating protein export, plays an essential role in gametocyte development and thus parasite transmission to the mosquito vector. This is Plasmepsin V from Plasmodium vivax (strain Salvador I).